Here is a 440-residue protein sequence, read N- to C-terminus: tRNA-2-methylthio-N(6)-dimethylallyladenosine synthase (440 aa).

One can recognise an MTTase N-terminal domain in the interval 7-123; it reads NTFYIHTFGC…LPQLIEQARS (117 aa). [4Fe-4S] cluster contacts are provided by Cys16, Cys52, Cys86, Cys159, Cys163, and Cys166. Residues 145–375 enclose the Radical SAM core domain; sequence RQGSISAFVP…IDLQNTISGE (231 aa). The 63-residue stretch at 378–440 folds into the TRAM domain; that stretch reads QQAIGSVVEV…TSATLTGRPV (63 aa).

Belongs to the methylthiotransferase family. MiaB subfamily. In terms of assembly, monomer. Requires [4Fe-4S] cluster as cofactor.

Its subcellular location is the cytoplasm. It carries out the reaction N(6)-dimethylallyladenosine(37) in tRNA + (sulfur carrier)-SH + AH2 + 2 S-adenosyl-L-methionine = 2-methylsulfanyl-N(6)-dimethylallyladenosine(37) in tRNA + (sulfur carrier)-H + 5'-deoxyadenosine + L-methionine + A + S-adenosyl-L-homocysteine + 2 H(+). In terms of biological role, catalyzes the methylthiolation of N6-(dimethylallyl)adenosine (i(6)A), leading to the formation of 2-methylthio-N6-(dimethylallyl)adenosine (ms(2)i(6)A) at position 37 in tRNAs that read codons beginning with uridine. The chain is tRNA-2-methylthio-N(6)-dimethylallyladenosine synthase from Pelodictyon phaeoclathratiforme (strain DSM 5477 / BU-1).